A 1581-amino-acid polypeptide reads, in one-letter code: Maestro heat-like repeat-containing protein family member 2B (1581 aa).

16 HEAT repeats span residues 123–160, 305–342, 401–441, 464–501, 526–543, 544–580, 658–695, 773–815, 960–997, 1017–1055, 1112–1150, 1153–1191, 1254–1291, 1295–1332, 1359–1379, and 1380–1416; these read FMMM…SIYK, ANPV…AEEP, MSNR…LVIG, DYLF…KLPS, AIGL…KLAE, MWKT…SLWK, ENHL…LTKT, TYKE…LKPA, CQEV…KFIP, PLCT…HMPV, KLMR…TGAH, HLYP…LGER, GVIL…EPIL, GNLR…GAPH, CESL…DINF, and YFKE…LTGR.

In terms of assembly, found in a complex at least composed of MROH2B isoform 2, PRKACA isoform 2 and TCP11. Interacts with PRKACA isoform 2. Interacts with TCP11. Post-translationally, constitutively phosphorylated on serine and threonine residues in acrosomal region of the sperm head, midpiece and flagellar regions of noncapacitated spermatozoa. Phosphorylation on tyrosine residues increases upon sperm capacitation within the acrosomal and tail regions in a protein kinase A (PKA)-dependent signaling pathway. Expressed strongly in round spermatids and fully mature spermatozoa. Expressed weakly in pachytene spermatocytes (at protein level). Isoform 2 is specifically expressed in the testis. Isoform 2 is expressed in pachytene spermatocytes and round spermatids. Isoform 3 is weakly expressed in testis.

It localises to the cytoplasm. The protein resides in the cytoplasmic vesicle. It is found in the secretory vesicle. Its subcellular location is the acrosome. The protein localises to the cell projection. It localises to the cilium. The protein resides in the flagellum. In terms of biological role, may play a role in the process of sperm capacitation. The polypeptide is Maestro heat-like repeat-containing protein family member 2B (Mus musculus (Mouse)).